Here is a 510-residue protein sequence, read N- to C-terminus: MATVGPRTGPNAGAEALALAAELQGEATCSICLEFFREPVSVECGHSFCRACIMRCWERPGAGTGTATRTLPCPLPCPQCREPARPSQLRPNRQLAAVVSLLRRFSLPPTAPGERGTPAVPARAAAARCSQHGEQLKLYCQDDGRAICVVCDRAREHRSHAVLPLEEAVQEAKELLDSRLRALKKVLEDYEAFRSTEERESKELLKQMAAEKEKVGAEFQALRAFLVEQEGRLLSRLEVLSREVTQKQNENLAQLEGEITQLSKLSGQIQETAQKPDLDFLQEFKSTLSKCSSVPSSKPTTVSSEMKNKVWNVSLKSFVLKGLLKKFKEDLQGELEKEEKVELTLDPDTANPRLILSLDLKSVRLGQRAQDLPNHPRRFDTNTRVLASCGFSSGRHHWEVEVGSKDGWAFGVARESVRRKGLTPFTPEEGVWAMQLNNGQYWAVTSPERTQLNCGHLSRVRVALDLEVGAVSFYAVEDMRHLYTFRVNFQERVFPLFSVCSTGTYLRIWP.

An RING-type zinc finger spans residues 29–81 (CSICLEFFREPVSVECGHSFCRACIMRCWERPGAGTGTATRTLPCPLPCPQCR). A Phosphoserine; by RPS6KA5 modification is found at Ser106. The B box-type zinc finger occupies 124 to 165 (AAAARCSQHGEQLKLYCQDDGRAICVVCDRAREHRSHAVLPL). Residues Cys129, His132, Cys151, and His157 each coordinate Zn(2+). The stretch at 165–275 (LEEAVQEAKE…SGQIQETAQK (111 aa)) forms a coiled coil. The B30.2/SPRY domain occupies 323-510 (LLKKFKEDLQ…STGTYLRIWP (188 aa)).

Belongs to the TRIM/RBCC family. As to quaternary structure, forms homodimers. Interacts with GNIP2. Interacts with GYG1. Interacts with RNF187 (via C-terminus). Post-translationally, phosphorylated at Ser-106 by RPS6KA5/MSK1, which stimulates the ubiquitin ligase activity. Auto-ubiquitinates via 'Lys-63'-linked polyubiquitination. As to expression, highly expressed in antigen-presenting cells.

Its subcellular location is the nucleus. The protein resides in the cytoplasm. The protein localises to the golgi apparatus. The catalysed reaction is S-ubiquitinyl-[E2 ubiquitin-conjugating enzyme]-L-cysteine + [acceptor protein]-L-lysine = [E2 ubiquitin-conjugating enzyme]-L-cysteine + N(6)-ubiquitinyl-[acceptor protein]-L-lysine.. It participates in protein modification; protein ubiquitination. Its function is as follows. E3 ubiquitin-protein ligase that have both tumor-promoting and tumor-suppressing activities and functions in several biological processes including innate immunity, regulation of ferroptosis as well as cell proliferation and migration. Acts as an antiviral effector against multiple viruses by targeting specific viral proteins for ubiquitination and degradation including norovirus NTPase protein. Mechanistically, recognizes the C-terminal glutamine-containing motif generated by viral proteases that process the polyproteins and trigger their ubiquitination and subsequent degradation. Mediates 'Lys-63'-linked polyubiquitination and stabilization of the JUN coactivator RNF187 in response to growth factor signaling via the MEK/ERK pathway, thereby regulating JUN transactivation and cellular proliferation. Promotes the TLR4-mediated signaling activation through its E3 ligase domain leading to production of pro-inflammatory cytokines and type I interferon. Also plays a negative role in the regulation of exogenous cytosolic DNA virus-triggered immune response. Mechanistically, enhances the 'Lys-48'-linked ubiquitination of STING1 leading to its proteasome-dependent degradation. Mediates the ubiquitination of the SIN3-HDAC chromatin remodeling complex component BRMS1. Modulates NCOA4-mediated ferritinophagy and ferroptosis in glioblastoma cells by ubiquitinating NCOA4, leading to its degradation. This chain is E3 ubiquitin-protein ligase TRIM7 (Trim7), found in Mus musculus (Mouse).